The chain runs to 90 residues: Probable Fe(2+)-trafficking protein (90 aa).

The protein belongs to the Fe(2+)-trafficking protein family.

Its function is as follows. Could be a mediator in iron transactions between iron acquisition and iron-requiring processes, such as synthesis and/or repair of Fe-S clusters in biosynthetic enzymes. The sequence is that of Probable Fe(2+)-trafficking protein from Cupriavidus taiwanensis (strain DSM 17343 / BCRC 17206 / CCUG 44338 / CIP 107171 / LMG 19424 / R1) (Ralstonia taiwanensis (strain LMG 19424)).